The primary structure comprises 420 residues: Cytochrome c biogenesis protein Ccs1 (420 aa).

3 helical membrane-spanning segments follow: residues 12–32 (LRFS…GTVI), 71–91 (TWWF…CTFL), and 157–177 (IAPI…IVGS).

Belongs to the Ccs1/CcsB family. As to quaternary structure, may interact with CcsA.

The protein resides in the plastid. It localises to the chloroplast thylakoid membrane. Its function is as follows. Required during biogenesis of c-type cytochromes (cytochrome c6 and cytochrome f) at the step of heme attachment. The chain is Cytochrome c biogenesis protein Ccs1 from Phaeodactylum tricornutum (strain CCAP 1055/1).